The chain runs to 471 residues: BPI fold-containing family B member 1 (471 aa).

The signal sequence occupies residues 1 to 18 (MTNPWIVSLLLGATLVQA). N-linked (GlcNAc...) asparagine glycosylation is found at N150, N157, N260, and N397. A disulfide bond links C154 and C197.

It belongs to the BPI/LBP/Plunc superfamily. Plunc family.

The protein localises to the secreted. Functionally, may play a role in innate immunity in mouth, nose and lungs. Binds bacterial lipopolysaccharide (LPS) and modulates the cellular responses to LPS. In Rattus norvegicus (Rat), this protein is BPI fold-containing family B member 1 (Bpifb1).